The following is a 509-amino-acid chain: H/ACA ribonucleoprotein complex subunit DKC1 (509 aa).

Residues 1 to 24 form a disordered region; the sequence is MADAEVITFPKKHKKKKDRKPLQE. At Ala-2 the chain carries N-acetylalanine. Residues 2–21 form a nucleolar localization region; it reads ADAEVITFPKKHKKKKDRKP. Positions 10-19 are enriched in basic residues; that stretch reads PKKHKKKKDR. Residues Lys-20, Lys-39, and Lys-43 each participate in a glycyl lysine isopeptide (Lys-Gly) (interchain with G-Cter in SUMO2) cross-link. Asp-125 (nucleophile) is an active-site residue. Lys-191 is covalently cross-linked (Glycyl lysine isopeptide (Lys-Gly) (interchain with G-Cter in SUMO2)). One can recognise a PUA domain in the interval 297 to 372; it reads KRLVMKDSAV…VAKIKRVIME (76 aa). Ser-387 is subject to Phosphoserine. Residue Lys-394 forms a Glycyl lysine isopeptide (Lys-Gly) (interchain with G-Cter in SUMO2) linkage. Lys-413 participates in a covalent cross-link: Glycyl lysine isopeptide (Lys-Gly) (interchain with G-Cter in SUMO1); alternate. Lys-413 is covalently cross-linked (Glycyl lysine isopeptide (Lys-Gly) (interchain with G-Cter in SUMO2); alternate). Lys-424 is covalently cross-linked (Glycyl lysine isopeptide (Lys-Gly) (interchain with G-Cter in SUMO2)). The tract at residues 446-509 is nuclear and nucleolar localization; the sequence is KRKRDSESES…KVKVVEEMSE (64 aa). Positions 447–509 are disordered; sequence RKRDSESESD…KVKVVEEMSE (63 aa). Residues Ser-451, Ser-453, and Ser-455 each carry the phosphoserine modification. The residue at position 458 (Thr-458) is a Phosphothreonine. Basic residues predominate over residues 466 to 476; it reads EKKKKKDKKPK. Phosphoserine is present on Ser-481. Phosphothreonine is present on Thr-485. Ser-508 carries the phosphoserine modification.

This sequence belongs to the pseudouridine synthase TruB family. In terms of assembly, part of the H/ACA small nucleolar ribonucleoprotein (H/ACA snoRNP) complex, which contains NHP2/NOLA2, GAR1/NOLA1, NOP10/NOLA3, and DKC1/NOLA4, which is presumed to be the catalytic subunit. The complex contains a stable core formed by binding of one or two NOP10-DKC1 heterodimers to NHP2; GAR1 subsequently binds to this core via DKC1. The complex binds a box H/ACA small nucleolar RNA (snoRNA), which may target the specific site of modification within the RNA substrate. During assembly, the complex contains NAF1 instead of GAR1/NOLA1. The complex also interacts with TERC, which contains a 3'-terminal domain related to the box H/ACA snoRNAs. Specific interactions with snoRNAs or TERC are mediated by GAR1 and NHP2. Associates with NOLC1/NOPP140. H/ACA snoRNPs interact with the SMN complex, consisting of SMN1 or SMN2, GEMIN2/SIP1, DDX20/GEMIN3, and GEMIN4. This is mediated by interaction between GAR1 and SMN1 or SMN2. The SMN complex may be required for correct assembly of the H/ACA snoRNP complex. Component of the telomerase holoenzyme complex composed of one molecule of TERT, one molecule of WRAP53/TCAB1, two molecules of H/ACA ribonucleoprotein complex subunits DKC1, NOP10, NHP2 and GAR1, and a telomerase RNA template component (TERC). The telomerase holoenzyme complex is associated with TEP1, SMG6/EST1A and POT1. Interacts with SHQ1; this interaction may lead to the stabilization of DKC1, from the time of its synthesis until its association with NOP10, NHP2, and NAF1 at the nascent H/ACA RNA. Interacts with HMBOX1. Interacts with DHX36. In terms of tissue distribution, ubiquitously expressed, with elevated levels in Purkinje cells, the olfactory bulb, and Leydig cells of the testis.

It localises to the nucleus. Its subcellular location is the nucleolus. The protein resides in the cajal body. It catalyses the reaction uridine in 5S rRNA = pseudouridine in 5S rRNA. Functionally, catalytic subunit of H/ACA small nucleolar ribonucleoprotein (H/ACA snoRNP) complex, which catalyzes pseudouridylation of rRNA. This involves the isomerization of uridine such that the ribose is subsequently attached to C5, instead of the normal N1. Each rRNA can contain up to 100 pseudouridine ('psi') residues, which may serve to stabilize the conformation of rRNAs. Required for ribosome biogenesis and telomere maintenance. Also required for correct processing or intranuclear trafficking of TERC, the RNA component of the telomerase reverse transcriptase (TERT) holoenzyme. This is H/ACA ribonucleoprotein complex subunit DKC1 (Dkc1) from Mus musculus (Mouse).